The chain runs to 435 residues: Ribulose bisphosphate carboxylase large chain (435 aa).

Positions 104 and 154 each coordinate substrate. Residue Lys156 is the Proton acceptor of the active site. Lys158 is a binding site for substrate. Mg(2+)-binding residues include Lys182, Asp184, and Glu185. Lys182 bears the N6-carboxylysine mark. Catalysis depends on His275, which acts as the Proton acceptor. Substrate contacts are provided by Arg276, His308, and Ser360.

This sequence belongs to the RuBisCO large chain family. Type I subfamily. In terms of assembly, heterohexadecamer of 8 large chains and 8 small chains. Mg(2+) is required as a cofactor.

Its subcellular location is the plastid. The protein resides in the chloroplast. The catalysed reaction is 2 (2R)-3-phosphoglycerate + 2 H(+) = D-ribulose 1,5-bisphosphate + CO2 + H2O. The enzyme catalyses D-ribulose 1,5-bisphosphate + O2 = 2-phosphoglycolate + (2R)-3-phosphoglycerate + 2 H(+). Functionally, ruBisCO catalyzes two reactions: the carboxylation of D-ribulose 1,5-bisphosphate, the primary event in carbon dioxide fixation, as well as the oxidative fragmentation of the pentose substrate in the photorespiration process. Both reactions occur simultaneously and in competition at the same active site. The polypeptide is Ribulose bisphosphate carboxylase large chain (Euglena pisciformis).